The sequence spans 181 residues: MHKLNNVAVLYAKILFKQAIKLNIVSKVKQDLKALKQFCKFLAKQNMSLQLIALMKNKINLMDYLSSTYGLNHLTYNFLKLLQKNNRLTYLSHIIIAFDAQVRNYQGVTLGYLITTKKWSKSAIKEIKDIFERKLNRKLIISNIVDKSIVGGIILRYEDYEYDLSMLGAINRFKSRIKLNY.

It belongs to the ATPase delta chain family. In terms of assembly, F-type ATPases have 2 components, F(1) - the catalytic core - and F(0) - the membrane proton channel. F(1) has five subunits: alpha(3), beta(3), gamma(1), delta(1), epsilon(1). F(0) has three main subunits: a(1), b(2) and c(10-14). The alpha and beta chains form an alternating ring which encloses part of the gamma chain. F(1) is attached to F(0) by a central stalk formed by the gamma and epsilon chains, while a peripheral stalk is formed by the delta and b chains.

It localises to the cell inner membrane. In terms of biological role, f(1)F(0) ATP synthase produces ATP from ADP in the presence of a proton or sodium gradient. F-type ATPases consist of two structural domains, F(1) containing the extramembraneous catalytic core and F(0) containing the membrane proton channel, linked together by a central stalk and a peripheral stalk. During catalysis, ATP synthesis in the catalytic domain of F(1) is coupled via a rotary mechanism of the central stalk subunits to proton translocation. Functionally, this protein is part of the stalk that links CF(0) to CF(1). It either transmits conformational changes from CF(0) to CF(1) or is implicated in proton conduction. The sequence is that of ATP synthase subunit delta from Orientia tsutsugamushi (strain Boryong) (Rickettsia tsutsugamushi).